Here is a 342-residue protein sequence, read N- to C-terminus: NLP effector protein Pc107869 (342 aa).

Residues 1 to 19 (MKTGFFLFAACAALVAVQA) form the signal peptide. N24 carries an N-linked (GlcNAc...) asparagine glycan. The interval 41–125 (APRTKAPPTK…PTPDPGPWEA (85 aa)) is disordered. Residues 55-75 (QQSSLSGSQEQQQEQIETPAP) are compositionally biased toward low complexity. The segment covering 93-121 (TPAPTPAPTPAPTPAPTPAPTPAPTPDPG) has biased composition (pro residues). The Hepta-peptide GHRHDWE motif signature appears at 226–232 (GHRHDWE).

This sequence belongs to the Necrosis inducing protein (NPP1) family.

It is found in the secreted. Functionally, secreted effector that contributes strongly to virulence during infection by P.capsici. Induces cell death in the Solanaceae, including Nicotiana benthamiana. The chain is NLP effector protein Pc107869 from Phytophthora capsici.